A 174-amino-acid chain; its full sequence is Shikimate kinase 2 (174 aa).

An ATP-binding site is contributed by 12 to 17 (GCGKTT). Positions 16 and 32 each coordinate Mg(2+). Asp34, Arg58, and Gly79 together coordinate substrate. The segment at 112–126 (QAAPEEDLRPTLTGK) is LID domain. Residue Arg120 coordinates ATP. Arg139 is a substrate binding site.

The protein belongs to the shikimate kinase family. AroL subfamily. As to quaternary structure, monomer. Mg(2+) serves as cofactor.

The protein resides in the cytoplasm. The catalysed reaction is shikimate + ATP = 3-phosphoshikimate + ADP + H(+). It functions in the pathway metabolic intermediate biosynthesis; chorismate biosynthesis; chorismate from D-erythrose 4-phosphate and phosphoenolpyruvate: step 5/7. In terms of biological role, catalyzes the specific phosphorylation of the 3-hydroxyl group of shikimic acid using ATP as a cosubstrate. The polypeptide is Shikimate kinase 2 (Shigella boydii serotype 18 (strain CDC 3083-94 / BS512)).